Here is a 38-residue protein sequence, read N- to C-terminus: Humanin-like protein (38 aa).

In terms of tissue distribution, in the testis, expressed in Leydig cells at 10, 20 and 60 days of age (at protein level). Also expressed in pachytene spermatocytes at day 20 and in vessels, peritubular cells and spermatids at day 60. Not detected in Sertoli cells (at protein level). In the adult ovary, expressed in stromal cells, granulosa cells, theca cells and oocytes at diestrus and proestrus (at protein level). Expressed in the anterior pituitary where it is detected in lactotropes and somatotropes with lower levels in females than males (at protein level). In the hippocampus, expressed in astrocytes but not in neurons or oligodendrocytes (at protein level). Expressed in muscle, liver and hypothalamus but not in epididymal fat (at protein level). Widely expressed with highest levels in cardiac and skeletal muscle and lowest levels in lung, testis and uterus. In the CNS, levels are relatively high in the cerebellum and cortex and low in the hippocampus. In the hippocampus, lower levels are detected in ovariectomized animals than in controls.

It localises to the mitochondrion. The protein resides in the secreted. The protein localises to the cytoplasm. In terms of biological role, plays a role as a neuroprotective factor. Protects against neuronal cell death induced by amyloid-beta peptides. Also protects against excitotoxic cell death. Prevents amyloid-beta peptide-induced spatial learning and memory impairments, protects against amyloid-beta peptide-induced suppression of hippocampal long-term potentiation, and inhibits amyloid-beta peptide-induced activation of STAT3 and inhibition of CASP3. Prevents glutamate-induced dendritic atrophy in hippocampal neurons and also prevents glutamate-induced decrease in SYP puncta number and total puncta area. Protects anterior pituitary cells from TNF-induced apoptosis. Plays a role in ovarian follicle development by acting as a cryoprotective factor for granulosa cells in the antral follicle. Increases androgen production in Leydig cells and promotes Leydig cell survival by preventing apoptosis. This is Humanin-like protein from Rattus norvegicus (Rat).